Consider the following 363-residue polypeptide: NAD(P)H-quinone oxidoreductase subunit 1, chloroplastic (363 aa).

6 consecutive transmembrane segments (helical) span residues 30–50, 104–124, 127–147, 253–273, 300–320, and 343–363; these read LVPILTLVLAITIGVLVIVWL, IAVISIILSYSVIPFSYHLVL, LGIGVFLWIAVSSIAPIGLLM, FGLFYVASYLNLLVSSLFVTV, VFGTTMGMFITLAKTYLFLFI, and FLLPISLGNLLLTTSFQLLSL.

Belongs to the complex I subunit 1 family. In terms of assembly, NDH is composed of at least 16 different subunits, 5 of which are encoded in the nucleus.

The protein localises to the plastid. Its subcellular location is the chloroplast thylakoid membrane. It catalyses the reaction a plastoquinone + NADH + (n+1) H(+)(in) = a plastoquinol + NAD(+) + n H(+)(out). It carries out the reaction a plastoquinone + NADPH + (n+1) H(+)(in) = a plastoquinol + NADP(+) + n H(+)(out). In terms of biological role, NDH shuttles electrons from NAD(P)H:plastoquinone, via FMN and iron-sulfur (Fe-S) centers, to quinones in the photosynthetic chain and possibly in a chloroplast respiratory chain. The immediate electron acceptor for the enzyme in this species is believed to be plastoquinone. Couples the redox reaction to proton translocation, and thus conserves the redox energy in a proton gradient. The chain is NAD(P)H-quinone oxidoreductase subunit 1, chloroplastic from Piper cenocladum (Ant piper).